The following is a 417-amino-acid chain: MSSATDFDPKPRRSSVAVDVGGVIVGGGAPVVVQSMTNTDTADIDSTVAQVAALFKAGSELVRITVDRDESAAAVPKIRERLLRLGMDVPLIGDFHYIGHKLLADHPACAEALAKYRINPGNVGFKDKKDKQFAEIIEMAIRYDKPVRIGVNWGSLDQDLLTALMDQNSAAGSPLSARQVTRETIVQSALISADLAEEIGLPRNRIILSAKVSQVQDLIAVYSMLSERSNHALHLGLTEAGMGSKGIVASSAAMGYVLQHGIGDTVRVSLTPEPNGDRTREVQVAQELLQVMGFRQFVPVVAACPGCGRTTSTVFQELAQNIQNDLRKNMPVWRDKYPGVEALNVAVMGCIVNGPGESKHADIGISLPGTGESPAAPVFIDGQKAMTLRGPNIASDFEALVADYIEKRFGQKSVAAE.

[4Fe-4S] cluster contacts are provided by C304, C307, C350, and E357.

Belongs to the IspG family. [4Fe-4S] cluster is required as a cofactor.

The enzyme catalyses (2E)-4-hydroxy-3-methylbut-2-enyl diphosphate + oxidized [flavodoxin] + H2O + 2 H(+) = 2-C-methyl-D-erythritol 2,4-cyclic diphosphate + reduced [flavodoxin]. Its pathway is isoprenoid biosynthesis; isopentenyl diphosphate biosynthesis via DXP pathway; isopentenyl diphosphate from 1-deoxy-D-xylulose 5-phosphate: step 5/6. Converts 2C-methyl-D-erythritol 2,4-cyclodiphosphate (ME-2,4cPP) into 1-hydroxy-2-methyl-2-(E)-butenyl 4-diphosphate. In Rhizobium rhizogenes (strain K84 / ATCC BAA-868) (Agrobacterium radiobacter), this protein is 4-hydroxy-3-methylbut-2-en-1-yl diphosphate synthase (flavodoxin).